The following is a 492-amino-acid chain: Glutamyl-tRNA(Gln) amidotransferase subunit A (492 aa).

Residues K78 and S158 each act as charge relay system in the active site. S182 serves as the catalytic Acyl-ester intermediate.

It belongs to the amidase family. GatA subfamily. Heterotrimer of A, B and C subunits.

The enzyme catalyses L-glutamyl-tRNA(Gln) + L-glutamine + ATP + H2O = L-glutaminyl-tRNA(Gln) + L-glutamate + ADP + phosphate + H(+). Its function is as follows. Allows the formation of correctly charged Gln-tRNA(Gln) through the transamidation of misacylated Glu-tRNA(Gln) in organisms which lack glutaminyl-tRNA synthetase. The reaction takes place in the presence of glutamine and ATP through an activated gamma-phospho-Glu-tRNA(Gln). The chain is Glutamyl-tRNA(Gln) amidotransferase subunit A from Rhodopseudomonas palustris (strain BisA53).